A 78-amino-acid polypeptide reads, in one-letter code: uncharacterized protein (78 aa).

In terms of biological role, this protein may be involved in virus assembly. Essential for virus function. This is an uncharacterized protein from Sulfolobus spindle-shape virus 1 (SSV1).